The chain runs to 322 residues: Germ cell-specific gene 1-like protein (322 aa).

The Cytoplasmic portion of the chain corresponds to 1–8 (MELSRRNR). Residues 9 to 29 (SLLSVVLNLLALSFSVAAFFT) form a helical membrane-spanning segment. Topologically, residues 30–125 (SYWCEGTHKV…IELSPDSEKG (96 aa)) are extracellular. A helical transmembrane segment spans residues 126 to 146 (VLWLSVISEFLYIILLSLGFL). Residues 147-166 (LMCLEFFSSSNFIDGLKINA) lie on the Cytoplasmic side of the membrane. Residues 167-187 (FAAIITVLSGLLGMVAHMMYM) traverse the membrane as a helical segment. At 188–209 (TVFQVTVNLGPKDWRPQTWYYG) the chain is on the extracellular side. A helical transmembrane segment spans residues 210–230 (WSFGLAWLSFTLCMSASVLTL). Over 231 to 322 (NTYTKTILEF…MDLEDDGDQC (92 aa)) the chain is Cytoplasmic.

This sequence belongs to the GSG1 family. In terms of assembly, component of the AMPAR complex.

The protein localises to the cell membrane. The protein resides in the synapse. In terms of biological role, as a component of the AMPAR complex, modifies AMPA receptor (AMPAR) gating. This Xenopus tropicalis (Western clawed frog) protein is Germ cell-specific gene 1-like protein (gsg1l).